Here is a 503-residue protein sequence, read N- to C-terminus: Ent-kaurene oxidase-like 5 (503 aa).

Residues 8–28 (GAGGIGVAAAAAVVAATLAVV) form a helical membrane-spanning segment. Cys448 serves as a coordination point for heme.

Belongs to the cytochrome P450 family. Heme is required as a cofactor. In terms of tissue distribution, expressed in roots.

The protein resides in the membrane. May hydroxylate diterpenes. The sequence is that of Ent-kaurene oxidase-like 5 from Oryza sativa subsp. japonica (Rice).